A 982-amino-acid polypeptide reads, in one-letter code: Nitrate reductase [NADPH] (982 aa).

Positions 1–128 (MEAPALEQRQ…PPSTRLTTIL (128 aa)) are disordered. Basic and acidic residues predominate over residues 10-20 (QSLHDSSERQQ). The span at 63-110 (TASPTTTDFSSSSSDDNSTTLETSVNYSHSSNTNTNTSCPPSPITSSS) shows a compositional bias: low complexity. Mo-molybdopterin is bound at residue C240. The Cytochrome b5 heme-binding domain maps to 617–692 (TRLITLEELR…MPTYHIGTLT (76 aa)). Residues H652 and H675 each coordinate heme. The FAD-binding FR-type domain maps to 721-836 (KTWNSAILTF…KGPVGKFVYQ (116 aa)). FAD contacts are provided by residues 776 to 779 (RAYT), 794 to 798 (LVKIY), 810 to 812 (QMT), S860, and T863. An NADP(+)-binding site is contributed by 952-961 (MVLLCGPEGM).

Belongs to the nitrate reductase family. In terms of assembly, homodimer. FAD serves as cofactor. Heme is required as a cofactor. Requires Mo-molybdopterin as cofactor.

It carries out the reaction nitrite + NADP(+) + H2O = nitrate + NADPH + H(+). The protein operates within nitrogen metabolism; nitrate reduction (assimilation). In terms of biological role, nitrate reductase is a key enzyme involved in the first step of nitrate assimilation in plants, fungi and bacteria. In Neurospora crassa (strain ATCC 24698 / 74-OR23-1A / CBS 708.71 / DSM 1257 / FGSC 987), this protein is Nitrate reductase [NADPH] (nit-3).